The primary structure comprises 594 residues: F-box/LRR-repeat protein At3g58980 (594 aa).

The 49-residue stretch at 1-49 folds into the F-box domain; it reads MDRISNLPNEIICHIVSFLSAKEAAFASILSKRWRNLFTIVIKLQFDDS. LRR repeat units follow at residues 103 to 125, 128 to 151, 152 to 174, 203 to 218, 219 to 242, 249 to 272, 288 to 314, 315 to 339, 344 to 369, 403 to 414, 415 to 437, 450 to 474, 503 to 518, 519 to 541, and 584 to 594; these read ILDL…VFTC, LVKL…DAFL, PALE…AFEK, SPTL…DLYE, CEFT…AVPD, LDSL…GYVD, LRNV…AIPV, FKNL…FLPF, CPNL…VCHC, LEKLSGLKLVKL, HSLT…SSKC, LPSL…AFQK, SQTL…YWAE, HNLE…AHVP, and LRNVEILRLWM.

This Arabidopsis thaliana (Mouse-ear cress) protein is F-box/LRR-repeat protein At3g58980.